The primary structure comprises 529 residues: Bifunctional purine biosynthesis protein PurH (529 aa).

Positions 1–148 (MQQRRPIRRA…KNHKDVAIVV (148 aa)) constitute an MGS-like domain.

The protein belongs to the PurH family.

It catalyses the reaction (6R)-10-formyltetrahydrofolate + 5-amino-1-(5-phospho-beta-D-ribosyl)imidazole-4-carboxamide = 5-formamido-1-(5-phospho-D-ribosyl)imidazole-4-carboxamide + (6S)-5,6,7,8-tetrahydrofolate. It carries out the reaction IMP + H2O = 5-formamido-1-(5-phospho-D-ribosyl)imidazole-4-carboxamide. It functions in the pathway purine metabolism; IMP biosynthesis via de novo pathway; 5-formamido-1-(5-phospho-D-ribosyl)imidazole-4-carboxamide from 5-amino-1-(5-phospho-D-ribosyl)imidazole-4-carboxamide (10-formyl THF route): step 1/1. Its pathway is purine metabolism; IMP biosynthesis via de novo pathway; IMP from 5-formamido-1-(5-phospho-D-ribosyl)imidazole-4-carboxamide: step 1/1. The sequence is that of Bifunctional purine biosynthesis protein PurH from Yersinia pseudotuberculosis serotype O:1b (strain IP 31758).